A 388-amino-acid polypeptide reads, in one-letter code: Processive diacylglycerol beta-glucosyltransferase (388 aa).

The protein belongs to the glycosyltransferase 28 family. UgtP subfamily.

It localises to the cell membrane. It carries out the reaction a 1,2-diacyl-3-O-(beta-D-glucopyranosyl)-sn-glycerol + UDP-alpha-D-glucose = a 1,2-diacyl-3-O-(beta-D-Glc-(1-&gt;6)-beta-D-Glc)-sn-glycerol + UDP + H(+). The catalysed reaction is a 1,2-diacyl-3-O-(beta-D-Glc-(1-&gt;6)-beta-D-Glc)-sn-glycerol + UDP-alpha-D-glucose = a 1,2-diacyl-3-O-(beta-D-Glc-(1-&gt;6)-beta-D-Glc-(1-&gt;6)-beta-D-Glc)-sn-glycerol + UDP + H(+). The enzyme catalyses a 1,2-diacyl-sn-glycerol + UDP-alpha-D-glucose = a 1,2-diacyl-3-O-(beta-D-glucopyranosyl)-sn-glycerol + UDP + H(+). The protein operates within glycolipid metabolism; diglucosyl-diacylglycerol biosynthesis. Its function is as follows. Processive glucosyltransferase involved in the biosynthesis of both the bilayer- and non-bilayer-forming membrane glucolipids. Is able to successively transfer up to three glucosyl residues to diacylglycerol (DAG), thereby catalyzing the formation of beta-monoglucosyl-DAG (3-O-(beta-D-glucopyranosyl)-1,2-diacyl-sn-glycerol), beta-diglucosyl-DAG (3-O-(beta-D-glucopyranosyl-beta-(1-&gt;6)-D-glucopyranosyl)-1,2-diacyl-sn-glycerol) and beta-triglucosyl-DAG (3-O-(beta-D-glucopyranosyl-beta-(1-&gt;6)-D-glucopyranosyl-beta-(1-&gt;6)-D-glucopyranosyl)-1,2-diacyl-sn-glycerol). Beta-diglucosyl-DAG is the predominant glycolipid found in Bacillales and is also used as a membrane anchor for lipoteichoic acid (LTA). The protein is Processive diacylglycerol beta-glucosyltransferase of Bacillus thuringiensis (strain Al Hakam).